The sequence spans 157 residues: SsrA-binding protein (157 aa).

The segment at 133–157 (LHDKRESEKKRDWGREKGRLLRARG) is disordered. Basic and acidic residues predominate over residues 135–151 (DKRESEKKRDWGREKGR).

Belongs to the SmpB family.

It localises to the cytoplasm. In terms of biological role, required for rescue of stalled ribosomes mediated by trans-translation. Binds to transfer-messenger RNA (tmRNA), required for stable association of tmRNA with ribosomes. tmRNA and SmpB together mimic tRNA shape, replacing the anticodon stem-loop with SmpB. tmRNA is encoded by the ssrA gene; the 2 termini fold to resemble tRNA(Ala) and it encodes a 'tag peptide', a short internal open reading frame. During trans-translation Ala-aminoacylated tmRNA acts like a tRNA, entering the A-site of stalled ribosomes, displacing the stalled mRNA. The ribosome then switches to translate the ORF on the tmRNA; the nascent peptide is terminated with the 'tag peptide' encoded by the tmRNA and targeted for degradation. The ribosome is freed to recommence translation, which seems to be the essential function of trans-translation. This is SsrA-binding protein from Bradyrhizobium sp. (strain ORS 278).